The primary structure comprises 331 residues: Anthranilate phosphoribosyltransferase (331 aa).

Residues Gly-79, 82–83, Ser-87, 89–92, 107–115, and Ser-119 each bind 5-phospho-alpha-D-ribose 1-diphosphate; these read GD, NIST, and KHCNTSISS. Residue Gly-79 coordinates anthranilate. Residue Ser-91 coordinates Mg(2+). Asn-110 is an anthranilate binding site. Position 165 (Arg-165) interacts with anthranilate. The Mg(2+) site is built by Asp-223 and Glu-224.

It belongs to the anthranilate phosphoribosyltransferase family. As to quaternary structure, homodimer. Mg(2+) is required as a cofactor.

It carries out the reaction N-(5-phospho-beta-D-ribosyl)anthranilate + diphosphate = 5-phospho-alpha-D-ribose 1-diphosphate + anthranilate. Its pathway is amino-acid biosynthesis; L-tryptophan biosynthesis; L-tryptophan from chorismate: step 2/5. Functionally, catalyzes the transfer of the phosphoribosyl group of 5-phosphorylribose-1-pyrophosphate (PRPP) to anthranilate to yield N-(5'-phosphoribosyl)-anthranilate (PRA). In Buchnera aphidicola subsp. Schlechtendalia chinensis, this protein is Anthranilate phosphoribosyltransferase.